A 99-amino-acid chain; its full sequence is Aspartyl/glutamyl-tRNA(Asn/Gln) amidotransferase subunit C (99 aa).

Belongs to the GatC family. In terms of assembly, heterotrimer of A, B and C subunits.

The catalysed reaction is L-glutamyl-tRNA(Gln) + L-glutamine + ATP + H2O = L-glutaminyl-tRNA(Gln) + L-glutamate + ADP + phosphate + H(+). It catalyses the reaction L-aspartyl-tRNA(Asn) + L-glutamine + ATP + H2O = L-asparaginyl-tRNA(Asn) + L-glutamate + ADP + phosphate + 2 H(+). Functionally, allows the formation of correctly charged Asn-tRNA(Asn) or Gln-tRNA(Gln) through the transamidation of misacylated Asp-tRNA(Asn) or Glu-tRNA(Gln) in organisms which lack either or both of asparaginyl-tRNA or glutaminyl-tRNA synthetases. The reaction takes place in the presence of glutamine and ATP through an activated phospho-Asp-tRNA(Asn) or phospho-Glu-tRNA(Gln). The polypeptide is Aspartyl/glutamyl-tRNA(Asn/Gln) amidotransferase subunit C (Sulfurihydrogenibium sp. (strain YO3AOP1)).